An 815-amino-acid chain; its full sequence is MAGNRLVPRYAHTDGLTRLAYTRDGKFLLTVGSNQVIRKFQVGSDEEPDSIDNHQDPITGIAVAENYFCTCSEDATVCVYPIDSPTEHTLLARTTLPIRDVAYSVDGNWIAIASDETAVKVVSSTDSSQIFSLRPAKASNKHVTYSPNGNFLAVSSCNGILYFYDTQTRELIKFLTNTIASLEAESEICSKAAWHPKNGTFAVASTDHFVSVISPDDWLPLYKLLPKENHSGVTDISWSSNGMYIAASFKKGGILIWDTQSHEVVVELPYSTVVALAWQPFENVLSFTTNQGILYSCPDVIPKSILKEENDPTKPLTSSKSKNRTSKELDDLFGSDDEQSQNVNDLDGNSANEENEFINHDGLDSSLDLDGDSYMVDENDLNLAKKRKQKALIDRTTTIENGSSKRRLLQASIHKPVHTGSTPWQGNRRYLCLNLVGFIWTVQQDAEHNTITVEFHDETTHRKYHFVDDQKFEMACLDHEGALYASPATESSPGVIYYKAHVDWSRKSEWAMALPMENESPVTISLSSSVVLVCTSAGYVRVFSRQGFPISIHRSKHLPFVACSSFQDTIITIANDGLSSDGNSRLVYSIEDISRDEMLQTGDGVALPPQGTLESVFFSDVGDPYIYDSTGVLLVLMHWRIPGQAKWIPVLDTNELERRKSRQESYWPVTVADNQFHCILLKGASRYPYFPRPMFTEFDFRIPCNTNNPDASTSVPVLEELQLRNKLFLTLLEDSIGDGDVTEDEKISIARLEANIDKALLQLIQKACLEERIERVYELTKTLRRTTSIAAAQKIALHHSLTNVAEKIGNLLSNV.

WD repeat units follow at residues 11-50, 53-90, 93-132, 135-174, and 228-267; these read AHTDGLTRLAYTRDGKFLLTVGSNQVIRKFQVGSDEEPDS, NHQDPITGIAVAENYFCTCSEDATVCVYPIDSPTEHTL, RTTLPIRDVAYSVDGNWIAIASDETAVKVVSSTDSSQIFS, PAKASNKHVTYSPNGNFLAVSSCNGILYFYDTQTRELIKF, and ENHSGVTDISWSSNGMYIAASFKKGGILIWDTQSHEVVVE. The tract at residues 306–362 is disordered; it reads LKEENDPTKPLTSSKSKNRTSKELDDLFGSDDEQSQNVNDLDGNSANEENEFINHDG. Residues 340–352 are compositionally biased toward polar residues; sequence SQNVNDLDGNSAN. Residues 517–553 form a WD 6 repeat; it reads ENESPVTISLSSSVVLVCTSAGYVRVFSRQGFPISIH.

As to quaternary structure, interacts with pof3 and pol1.

The protein resides in the nucleus. Its subcellular location is the chromosome. Has a role in regulating DNA replication complexes. Acts as a regulator of post DNA replication initiation. Associates with chromatin during G1 and S phases of mitosis. Required for the transcriptional repression of the outer repeats of the centromeric region. Acts as a polymerase alpha replication accessory factor and is important for S-phase DNA damage survival. Plays a role in lagging-strand synthesis and Ozaki fragment processing, in addition to DNA repair. The polypeptide is Minichromosome loss protein 1 (mcl1) (Schizosaccharomyces pombe (strain 972 / ATCC 24843) (Fission yeast)).